Consider the following 332-residue polypeptide: 5-formaminoimidazole-4-carboxamide-1-(beta)-D-ribofuranosyl 5'-monophosphate synthetase (332 aa).

Residues histidine 9 and serine 72 each contribute to the 5-amino-1-(5-phospho-beta-D-ribosyl)imidazole-4-carboxamide site. The 231-residue stretch at 93–323 (RNLFPWESNQ…IGREINLAIQ (231 aa)) folds into the ATP-grasp domain. Residues 123–183 (PEDV…IPMY) and glutamate 205 contribute to the ATP site. Asparagine 229 provides a ligand contact to 5-amino-1-(5-phospho-beta-D-ribosyl)imidazole-4-carboxamide. 2 residues coordinate Mg(2+): glutamate 268 and glutamate 281.

Belongs to the phosphohexose mutase family. Mg(2+) serves as cofactor. Mn(2+) is required as a cofactor.

It carries out the reaction 5-amino-1-(5-phospho-beta-D-ribosyl)imidazole-4-carboxamide + formate + ATP = 5-formamido-1-(5-phospho-D-ribosyl)imidazole-4-carboxamide + ADP + phosphate. The protein operates within purine metabolism; IMP biosynthesis via de novo pathway; 5-formamido-1-(5-phospho-D-ribosyl)imidazole-4-carboxamide from 5-amino-1-(5-phospho-D-ribosyl)imidazole-4-carboxamide (formate route): step 1/1. In terms of biological role, catalyzes the ATP- and formate-dependent formylation of 5-aminoimidazole-4-carboxamide-1-beta-d-ribofuranosyl 5'-monophosphate (AICAR) to 5-formaminoimidazole-4-carboxamide-1-beta-d-ribofuranosyl 5'-monophosphate (FAICAR) in the absence of folates. The sequence is that of 5-formaminoimidazole-4-carboxamide-1-(beta)-D-ribofuranosyl 5'-monophosphate synthetase from Metallosphaera sedula (strain ATCC 51363 / DSM 5348 / JCM 9185 / NBRC 15509 / TH2).